The chain runs to 104 residues: Urease subunit beta (104 aa).

The protein belongs to the urease beta subunit family. Heterotrimer of UreA (gamma), UreB (beta) and UreC (alpha) subunits. Three heterotrimers associate to form the active enzyme.

It localises to the cytoplasm. It catalyses the reaction urea + 2 H2O + H(+) = hydrogencarbonate + 2 NH4(+). The protein operates within nitrogen metabolism; urea degradation; CO(2) and NH(3) from urea (urease route): step 1/1. The chain is Urease subunit beta from Rhodopseudomonas palustris (strain BisB5).